Here is a 310-residue protein sequence, read N- to C-terminus: Tagatose-6-phosphate kinase (310 aa).

This sequence belongs to the carbohydrate kinase PfkB family. LacC subfamily.

It catalyses the reaction D-tagatofuranose 6-phosphate + ATP = D-tagatofuranose 1,6-bisphosphate + ADP + H(+). Its pathway is carbohydrate metabolism; D-tagatose 6-phosphate degradation; D-glyceraldehyde 3-phosphate and glycerone phosphate from D-tagatose 6-phosphate: step 1/2. The chain is Tagatose-6-phosphate kinase from Streptococcus agalactiae serotype V (strain ATCC BAA-611 / 2603 V/R).